A 154-amino-acid polypeptide reads, in one-letter code: Terephthalate 1,2-dioxygenase, terminal oxygenase component subunit beta 2 (154 aa).

The protein belongs to the bacterial ring-hydroxylating dioxygenase beta subunit family. As to quaternary structure, heterotetramer composed of 2 alpha (TphA2I and TphA2II) and 2 beta (TphA3I and TphA3II) subunits. Part of a multicomponent enzyme system composed of a reductase (TphA1I or TphA1II) and a two-subunit oxygenase component (TphA2I or TphA2II and TphA3I or TphA3II). Fe cation serves as cofactor.

The enzyme catalyses terephthalate + NADH + O2 + H(+) = (3S,4R)-3,4-dihydroxycyclohexa-1,5-diene-1,4-dicarboxylate + NAD(+). With respect to regulation, inhibited by EDTA. Its function is as follows. Component of the terephthalate 1,2-dioxygenase multicomponent enzyme system which catalyzes the dioxygenation of terephthalate (TER/TPA) to 1,2-dihydroxy-3,5-cyclohexadiene-1,4-dicarboxylic acid (DCD). It can also use 2,5-dicarboxypyridine (PDC) and 1,4-napthalenedicarboxylic acid (NDC) as substrates, and preferentially uses NADPH which is the physiological electron donor. This Comamonas sp protein is Terephthalate 1,2-dioxygenase, terminal oxygenase component subunit beta 2 (tphA3II).